Reading from the N-terminus, the 100-residue chain is UPF0213 protein YhbQ (100 aa).

Positions 2 to 77 constitute a GIY-YIG domain; sequence TPWFLYLIRT…KQLTKRQKER (76 aa).

This sequence belongs to the UPF0213 family.

The protein is UPF0213 protein YhbQ of Escherichia coli O127:H6 (strain E2348/69 / EPEC).